A 317-amino-acid chain; its full sequence is Transaldolase (317 aa).

The active-site Schiff-base intermediate with substrate is Lys132.

This sequence belongs to the transaldolase family. Type 1 subfamily. Homodimer.

It is found in the cytoplasm. The catalysed reaction is D-sedoheptulose 7-phosphate + D-glyceraldehyde 3-phosphate = D-erythrose 4-phosphate + beta-D-fructose 6-phosphate. It functions in the pathway carbohydrate degradation; pentose phosphate pathway; D-glyceraldehyde 3-phosphate and beta-D-fructose 6-phosphate from D-ribose 5-phosphate and D-xylulose 5-phosphate (non-oxidative stage): step 2/3. Functionally, transaldolase is important for the balance of metabolites in the pentose-phosphate pathway. The chain is Transaldolase from Histophilus somni (strain 2336) (Haemophilus somnus).